The sequence spans 66 residues: Large ribosomal subunit protein bL31 (66 aa).

Positions 16, 18, 36, and 39 each coordinate Zn(2+).

This sequence belongs to the bacterial ribosomal protein bL31 family. Type A subfamily. Part of the 50S ribosomal subunit. The cofactor is Zn(2+).

Functionally, binds the 23S rRNA. The protein is Large ribosomal subunit protein bL31 of Geobacillus thermodenitrificans (strain NG80-2).